We begin with the raw amino-acid sequence, 357 residues long: Quinolinate synthase (357 aa).

Iminosuccinate is bound by residues histidine 50 and serine 71. Cysteine 116 lines the [4Fe-4S] cluster pocket. Iminosuccinate contacts are provided by residues 142–144 and serine 159; that span reads YAN. Cysteine 203 serves as a coordination point for [4Fe-4S] cluster. Iminosuccinate contacts are provided by residues 229–231 and threonine 246; that span reads HPE. A [4Fe-4S] cluster-binding site is contributed by cysteine 300.

It belongs to the quinolinate synthase family. Type 1 subfamily. The cofactor is [4Fe-4S] cluster.

The protein resides in the cytoplasm. It carries out the reaction iminosuccinate + dihydroxyacetone phosphate = quinolinate + phosphate + 2 H2O + H(+). It participates in cofactor biosynthesis; NAD(+) biosynthesis; quinolinate from iminoaspartate: step 1/1. Catalyzes the condensation of iminoaspartate with dihydroxyacetone phosphate to form quinolinate. The sequence is that of Quinolinate synthase from Shewanella oneidensis (strain ATCC 700550 / JCM 31522 / CIP 106686 / LMG 19005 / NCIMB 14063 / MR-1).